The sequence spans 180 residues: CASP-like protein 2A3 (180 aa).

The Cytoplasmic segment spans residues 1 to 13 (MELIYGSTMRKKW). A helical transmembrane segment spans residues 14-34 (IEPALRFLPVGLCISALALML). Over 35–55 (KSKEGNENGILEYKHVGAFRY) the chain is Extracellular. Residues 56–76 (LAYANGICAAYSVLSTFNSVV) traverse the membrane as a helical segment. Topologically, residues 77-85 (PRSCSLSRA) are cytoplasmic. The helical transmembrane segment at 86-106 (WFVFVFDQAFTYLMLGAGAVV) threads the bilayer. The Extracellular segment spans residues 107-135 (TEVLYLAYKGDEKITWFEICPYYGRFCNR). The chain crosses the membrane as a helical span at residues 136-156 (VAASLVISFLALLCFIPLSLI). Residues 157–180 (SAYRVFSKYDPPSLCKKDQITSQS) lie on the Cytoplasmic side of the membrane.

Belongs to the Casparian strip membrane proteins (CASP) family. As to quaternary structure, homodimer and heterodimers.

It is found in the cell membrane. The chain is CASP-like protein 2A3 from Picea sitchensis (Sitka spruce).